The sequence spans 382 residues: Ribonuclease D (382 aa).

A 3'-5' exonuclease domain is found at 4 to 169 (ITTTAELASV…DVFAALDADL (166 aa)). One can recognise an HRDC domain in the interval 208-289 (KPKDLAVMME…QRGLARDPRE (82 aa)).

Belongs to the RNase D family. It depends on a divalent metal cation as a cofactor.

It localises to the cytoplasm. The catalysed reaction is Exonucleolytic cleavage that removes extra residues from the 3'-terminus of tRNA to produce 5'-mononucleotides.. Exonuclease involved in the 3' processing of various precursor tRNAs. Initiates hydrolysis at the 3'-terminus of an RNA molecule and releases 5'-mononucleotides. This Nitrobacter hamburgensis (strain DSM 10229 / NCIMB 13809 / X14) protein is Ribonuclease D.